Reading from the N-terminus, the 476-residue chain is Calcitonin gene-related peptide type 1 receptor (476 aa).

An N-terminal signal peptide occupies residues 1–33; the sequence is METLQMGLLSRSALFKYIIIFLIMINTRGYVLA. The Extracellular segment spans residues 34 to 154; that stretch reads SQEQEAKTSV…FTHEKVKTAL (121 aa). Cystine bridges form between C63-C89, C80-C120, and C103-C142. N-linked (GlcNAc...) asparagine glycosylation is found at N81, N133, and N138. The chain crosses the membrane as a helical span at residues 155 to 179; that stretch reads NLYYLTIIGHGLSIASLLISLGIFF. Over 180-190 the chain is Cytoplasmic; sequence YFKNLSCQRIT. The chain crosses the membrane as a helical span at residues 191-213; the sequence is LHKNLFFSFVCNSIITIISLSAV. The Extracellular portion of the chain corresponds to 214–224; sequence ANNQALVATNP. A helical transmembrane segment spans residues 225 to 253; that stretch reads VICKISQFIHLYLMGCNYFWMLCEGIYLH. At 254-267 the chain is on the cytoplasmic side; that stretch reads TLIVVAVFAEKQHL. The chain crosses the membrane as a helical span at residues 268 to 288; it reads MWYYLLGWGFPLIPACIHAVA. The Extracellular segment spans residues 289-304; it reads RSLYYNDNCWISSETH. Residues 305–329 traverse the membrane as a helical segment; the sequence is LLYIIHGPICAALLVNLFFLLNIVR. At 330–344 the chain is on the cytoplasmic side; sequence VLITKLKVTHQAESN. The chain crosses the membrane as a helical span at residues 345 to 366; it reads LYMKAVRATLILVPLLGIEFVL. Residues 367 to 381 are Extracellular-facing; it reads FPWKPEGRIAEEIYD. Residues 382–402 form a helical membrane-spanning segment; the sequence is YVMHILMHYQGLLVATIFCFF. Residues 403–476 lie on the Cytoplasmic side of the membrane; it reads NGEVQAVLKR…VFFKTEKQYM (74 aa).

This sequence belongs to the G-protein coupled receptor 2 family.

It is found in the cell membrane. May function as G protein-coupled receptor for calcitonin-gene-related peptides and adrenomedullin. Specificity may be modulated by accessory proteins. May activate cAMP-dependent pathway. This is Calcitonin gene-related peptide type 1 receptor (calcrl) from Xenopus laevis (African clawed frog).